We begin with the raw amino-acid sequence, 342 residues long: Transmembrane protein 115 homolog (342 aa).

Residues 1-21 (MQYSSRFLELNIPDSFLNINK) lie on the Cytoplasmic side of the membrane. Residues 22–42 (IPDATKFITVTYICLTATLFC) form a helical membrane-spanning segment. Topologically, residues 43-121 (IRRSLYNKLV…NWNSSKEMFK (79 aa)) are lumenal. Residue N114 is glycosylated (N-linked (GlcNAc...) asparagine). The helical transmembrane segment at 122-142 (FIIVLGSLTNVLIIMLTLLVS) threads the bilayer. Residues 143–159 (FFSNKVRLDIPLDGNYT) lie on the Cytoplasmic side of the membrane. A helical transmembrane segment spans residues 160 to 180 (ILIGFPIIYRQLLPETTIIHL). Topologically, residues 181–207 (KTPQFLAKNFRFKLLPIFVMFTMTVTQ) are lumenal. The helical transmembrane segment at 208 to 228 (IIWFHHFAQLFSIWVTFFASW) threads the bilayer. Residues 229–342 (SYLRFFQKLA…QVLEERMVNP (114 aa)) lie on the Cytoplasmic side of the membrane.

Belongs to the TMEM115 family. Homooligomer.

The protein localises to the golgi apparatus membrane. Functionally, may play a role in retrograde transport of proteins from the Golgi to the endoplasmic reticulum. In Saccharomyces cerevisiae (strain ATCC 204508 / S288c) (Baker's yeast), this protein is Transmembrane protein 115 homolog.